Here is a 446-residue protein sequence, read N- to C-terminus: ATP-dependent protease ATPase subunit HslU (446 aa).

Residues Ile18, 60 to 65, Asp259, Glu324, and Arg396 contribute to the ATP site; that span reads GVGKTE.

The protein belongs to the ClpX chaperone family. HslU subfamily. As to quaternary structure, a double ring-shaped homohexamer of HslV is capped on each side by a ring-shaped HslU homohexamer. The assembly of the HslU/HslV complex is dependent on binding of ATP.

It localises to the cytoplasm. Its function is as follows. ATPase subunit of a proteasome-like degradation complex; this subunit has chaperone activity. The binding of ATP and its subsequent hydrolysis by HslU are essential for unfolding of protein substrates subsequently hydrolyzed by HslV. HslU recognizes the N-terminal part of its protein substrates and unfolds these before they are guided to HslV for hydrolysis. The chain is ATP-dependent protease ATPase subunit HslU from Baumannia cicadellinicola subsp. Homalodisca coagulata.